The primary structure comprises 1538 residues: Pentafunctional AROM polypeptide (1538 aa).

Residues 1–384 (MGVPTKISIL…HEPRASTVSN (384 aa)) form a 3-dehydroquinate synthase region. Residues 44-46 (DTN), 81-84 (ESSK), 114-116 (GGV), and Asp119 each bind NAD(+). Arg130 provides a ligand contact to 7-phospho-2-dehydro-3-deoxy-D-arabino-heptonate. NAD(+) is bound at residue 139 to 140 (TT). Residues Asp146 and Lys152 each contribute to the 7-phospho-2-dehydro-3-deoxy-D-arabino-heptonate site. Lys161 provides a ligand contact to NAD(+). Position 162 (Asn162) interacts with 7-phospho-2-dehydro-3-deoxy-D-arabino-heptonate. NAD(+) contacts are provided by residues 179 to 182 (FLNT) and Asn190. Glu194 is a binding site for Zn(2+). Residues 194 to 197 (EVIK) and Lys250 contribute to the 7-phospho-2-dehydro-3-deoxy-D-arabino-heptonate site. The Proton acceptor; for 3-dehydroquinate synthase activity role is filled by Glu260. 7-phospho-2-dehydro-3-deoxy-D-arabino-heptonate contacts are provided by residues 264–268 (RNLLN) and His271. His271 serves as a coordination point for Zn(2+). Residue His275 is the Proton acceptor; for 3-dehydroquinate synthase activity of the active site. Positions 287 and 356 each coordinate 7-phospho-2-dehydro-3-deoxy-D-arabino-heptonate. A Zn(2+)-binding site is contributed by His287. Positions 397–842 (VSPGVPKGLD…WDCLSQTFKV (446 aa)) are EPSP synthase. The For EPSP synthase activity role is filled by Cys824. A shikimate kinase region spans residues 866–973 (ASIFIIGMRG…RRKQNTFFVS (108 aa)). 872-879 (GMRGAGKT) serves as a coordination point for ATP. The segment at 974–1194 (LTLPDLGLAA…AAPGQLSARE (221 aa)) is 3-dehydroquinase. His1097 acts as the Proton acceptor; for 3-dehydroquinate dehydratase activity in catalysis. Lys1125 (schiff-base intermediate with substrate; for 3-dehydroquinate dehydratase activity) is an active-site residue. The segment at 1207–1538 (AKKFAVIGNP…YEHPVLNHSS (332 aa)) is shikimate dehydrogenase.

In the N-terminal section; belongs to the sugar phosphate cyclases superfamily. Dehydroquinate synthase family. The protein in the 2nd section; belongs to the EPSP synthase family. This sequence in the 3rd section; belongs to the shikimate kinase family. It in the 4th section; belongs to the type-I 3-dehydroquinase family. In the C-terminal section; belongs to the shikimate dehydrogenase family. As to quaternary structure, homodimer. Zn(2+) serves as cofactor.

Its subcellular location is the cytoplasm. It catalyses the reaction 7-phospho-2-dehydro-3-deoxy-D-arabino-heptonate = 3-dehydroquinate + phosphate. It carries out the reaction 3-dehydroquinate = 3-dehydroshikimate + H2O. The enzyme catalyses shikimate + NADP(+) = 3-dehydroshikimate + NADPH + H(+). The catalysed reaction is shikimate + ATP = 3-phosphoshikimate + ADP + H(+). It catalyses the reaction 3-phosphoshikimate + phosphoenolpyruvate = 5-O-(1-carboxyvinyl)-3-phosphoshikimate + phosphate. The protein operates within metabolic intermediate biosynthesis; chorismate biosynthesis; chorismate from D-erythrose 4-phosphate and phosphoenolpyruvate: step 2/7. It participates in metabolic intermediate biosynthesis; chorismate biosynthesis; chorismate from D-erythrose 4-phosphate and phosphoenolpyruvate: step 3/7. It functions in the pathway metabolic intermediate biosynthesis; chorismate biosynthesis; chorismate from D-erythrose 4-phosphate and phosphoenolpyruvate: step 4/7. Its pathway is metabolic intermediate biosynthesis; chorismate biosynthesis; chorismate from D-erythrose 4-phosphate and phosphoenolpyruvate: step 5/7. The protein operates within metabolic intermediate biosynthesis; chorismate biosynthesis; chorismate from D-erythrose 4-phosphate and phosphoenolpyruvate: step 6/7. Functionally, the AROM polypeptide catalyzes 5 consecutive enzymatic reactions in prechorismate polyaromatic amino acid biosynthesis. The polypeptide is Pentafunctional AROM polypeptide (Ajellomyces capsulatus (strain NAm1 / WU24) (Darling's disease fungus)).